The sequence spans 358 residues: Alanine racemase (358 aa).

The active-site Proton acceptor; specific for D-alanine is the lysine 34. Lysine 34 carries the post-translational modification N6-(pyridoxal phosphate)lysine. Substrate is bound at residue arginine 129. The active-site Proton acceptor; specific for L-alanine is tyrosine 254. Residue methionine 302 participates in substrate binding.

The protein belongs to the alanine racemase family. The cofactor is pyridoxal 5'-phosphate.

It carries out the reaction L-alanine = D-alanine. The protein operates within amino-acid biosynthesis; D-alanine biosynthesis; D-alanine from L-alanine: step 1/1. Its function is as follows. Catalyzes the interconversion of L-alanine and D-alanine. May also act on other amino acids. In Vibrio vulnificus (strain CMCP6), this protein is Alanine racemase (alr).